We begin with the raw amino-acid sequence, 426 residues long: MSRQAWIETSALIECISEYGTKCSFDTFQGLTINDISTLSNLMNQISVASVGFLNDPRTPLQAMSCEFVNFISTADRHAYMLQKNWFDSDVAPNVTTDNFIATYIKPRFSRTVSDVLRQVNNFALQPMENPKLISRQLGVLKAYDIPYSTPINPMDVARSSANVVGNVSQRRALSTPLIQGAQNVTFIVSESDKIIFGTRSLNPIAPGNFQINVPPWYSDLNVVDARIYFTNSFLGCTIQNVQVNAVNGNDPVATITVPTDNNPFIVDSDSVVSLSLSGGAINVTTAVNLTGYAIAIEGKFNMQMNASPSYYTLSSLTIQTSVIDDFGLSAFLEPFRIRLRASGQTEIFSQSMNTLTENLIRQYMPANQAVNIAFVSPWYRFSERARTILTFNQPLLPFASRKLIIRHLWVIMSFIAVFGRYYTVN.

This sequence belongs to the phytoreovirus outer capsid protein P8 family. As to quaternary structure, homotrimer. Homomultimer.

It is found in the virion. The protein localises to the host cytoplasm. Functionally, capsid protein which self-assembles to form the outer icosahedral capsid with a T=13 symmetry, about 70 nm in diameter and consisting of 260 P8 trimers. Mediates the secretion of assembled virus-like particles from host insect cells. The protein is Outer capsid protein P8 of Nephotettix cincticeps (Green rice leafhopper).